The chain runs to 145 residues: D-aminoacyl-tRNA deacylase (145 aa).

A Gly-cisPro motif, important for rejection of L-amino acids motif is present at residues 137–138 (GP).

This sequence belongs to the DTD family. As to quaternary structure, homodimer.

The protein localises to the cytoplasm. It carries out the reaction glycyl-tRNA(Ala) + H2O = tRNA(Ala) + glycine + H(+). The catalysed reaction is a D-aminoacyl-tRNA + H2O = a tRNA + a D-alpha-amino acid + H(+). Its function is as follows. An aminoacyl-tRNA editing enzyme that deacylates mischarged D-aminoacyl-tRNAs. Also deacylates mischarged glycyl-tRNA(Ala), protecting cells against glycine mischarging by AlaRS. Acts via tRNA-based rather than protein-based catalysis; rejects L-amino acids rather than detecting D-amino acids in the active site. By recycling D-aminoacyl-tRNA to D-amino acids and free tRNA molecules, this enzyme counteracts the toxicity associated with the formation of D-aminoacyl-tRNA entities in vivo and helps enforce protein L-homochirality. The polypeptide is D-aminoacyl-tRNA deacylase (Alteromonas mediterranea (strain DSM 17117 / CIP 110805 / LMG 28347 / Deep ecotype)).